The following is a 605-amino-acid chain: Granule-bound starch synthase 1, chloroplastic/amyloplastic (605 aa).

Residues 1-72 constitute a chloroplast transit peptide; it reads MAALATSQLV…GGRFPSLVVC (72 aa). Residue K91 coordinates ADP-alpha-D-glucose.

It belongs to the glycosyltransferase 1 family. Bacterial/plant glycogen synthase subfamily.

Its subcellular location is the plastid. It localises to the chloroplast. The protein localises to the amyloplast. The enzyme catalyses an NDP-alpha-D-glucose + [(1-&gt;4)-alpha-D-glucosyl](n) = [(1-&gt;4)-alpha-D-glucosyl](n+1) + a ribonucleoside 5'-diphosphate + H(+). The protein operates within glycan biosynthesis; starch biosynthesis. Its function is as follows. Required for the synthesis of amylose in endosperm. This chain is Granule-bound starch synthase 1, chloroplastic/amyloplastic (WAXY), found in Zea mays (Maize).